Here is a 205-residue protein sequence, read N- to C-terminus: Glycerol-3-phosphate acyltransferase (205 aa).

6 helical membrane passes run 5–25, 54–74, 87–107, 117–137, 138–158, and 162–182; these read LALG…GYLA, GPAA…VWLA, IVLG…WLAF, VGLL…VWGV, CFAV…ATPL, and LWRA…YIVW.

It belongs to the PlsY family. In terms of assembly, probably interacts with PlsX.

It localises to the cell inner membrane. The catalysed reaction is an acyl phosphate + sn-glycerol 3-phosphate = a 1-acyl-sn-glycero-3-phosphate + phosphate. Its pathway is lipid metabolism; phospholipid metabolism. Its function is as follows. Catalyzes the transfer of an acyl group from acyl-phosphate (acyl-PO(4)) to glycerol-3-phosphate (G3P) to form lysophosphatidic acid (LPA). This enzyme utilizes acyl-phosphate as fatty acyl donor, but not acyl-CoA or acyl-ACP. This chain is Glycerol-3-phosphate acyltransferase, found in Gloeobacter violaceus (strain ATCC 29082 / PCC 7421).